The following is a 111-amino-acid chain: C-X-C motif chemokine 14 (111 aa).

An N-terminal signal peptide occupies residues 1–34 (MSLLPRRAPPVSMRLLAAALLLLLLALYTARVDG). 2 disulfide bridges follow: cysteine 37–cysteine 63 and cysteine 39–cysteine 84. Residues 67-81 (MVIITTKSVSRYRGQ) carry the D-box motif.

The protein belongs to the intercrine alpha (chemokine CxC) family. Post-translationally, ubiquitinated, followed by degradation by the proteasome. As to expression, expressed in heart, brain, placenta, lung, liver, skeletal muscle, kidney and pancreas. Highly expressed in normal tissue without inflammatory stimuli and infrequently expressed in cancer cell lines. Weakly expressed in monocyte-derived dendritic cells. Not detected in lung or unstimulated peripheral blood lymphocytes.

It localises to the secreted. Functionally, potent chemoattractant for neutrophils, and weaker for dendritic cells. Not chemotactic for T-cells, B-cells, monocytes, natural killer cells or granulocytes. Does not inhibit proliferation of myeloid progenitors in colony formation assays. This is C-X-C motif chemokine 14 (CXCL14) from Homo sapiens (Human).